We begin with the raw amino-acid sequence, 289 residues long: Protease HtpX homolog (289 aa).

Helical transmembrane passes span Leu8–Gly28 and Ser29–Gln49. His132 is a Zn(2+) binding site. Residue Glu133 is part of the active site. His136 lines the Zn(2+) pocket. Helical transmembrane passes span Val151–Ile171 and Leu183–Ile203. Position 208 (Glu208) interacts with Zn(2+).

The protein belongs to the peptidase M48B family. Requires Zn(2+) as cofactor.

Its subcellular location is the cell inner membrane. This chain is Protease HtpX homolog, found in Nostoc sp. (strain PCC 7120 / SAG 25.82 / UTEX 2576).